Reading from the N-terminus, the 209-residue chain is Uracil phosphoribosyltransferase (209 aa).

Residues Arg79, Arg104, and 131–139 (DPMLATGNS) contribute to the 5-phospho-alpha-D-ribose 1-diphosphate site. Uracil contacts are provided by residues Ile194 and 199–201 (GDA). Asp200 serves as a coordination point for 5-phospho-alpha-D-ribose 1-diphosphate.

It belongs to the UPRTase family. Mg(2+) is required as a cofactor.

The enzyme catalyses UMP + diphosphate = 5-phospho-alpha-D-ribose 1-diphosphate + uracil. It participates in pyrimidine metabolism; UMP biosynthesis via salvage pathway; UMP from uracil: step 1/1. Its activity is regulated as follows. Allosterically activated by GTP. Functionally, catalyzes the conversion of uracil and 5-phospho-alpha-D-ribose 1-diphosphate (PRPP) to UMP and diphosphate. This chain is Uracil phosphoribosyltransferase, found in Rhizobium rhizogenes (strain K84 / ATCC BAA-868) (Agrobacterium radiobacter).